The sequence spans 155 residues: Perlucin (155 aa).

Cystine bridges form between Cys2–Cys13, Cys30–Cys127, and Cys102–Cys119. In terms of domain architecture, C-type lectin spans 9-128; the sequence is NRRSCYWFST…CQKPSHFICE (120 aa). Asn84 carries an N-linked (GlcNAc...) asparagine glycan. A run of 2 repeats spans residues 136–145 and 146–155.

Glycosylated.

In terms of biological role, may promote nucleation and/or growth of calcium carbonate crystals. Binds to D-galactose and D-mannose/D-glucose. In Haliotis laevigata (Smooth Australian abalone), this protein is Perlucin.